Consider the following 810-residue polypeptide: Exocyst complex component 6B (810 aa).

Positions Thr79–Gln118 form a coiled coil. Residues Glu258–Val282 form a disordered region. The segment covering Asp272 to Val282 has biased composition (acidic residues).

This sequence belongs to the SEC15 family. In terms of assembly, the exocyst complex is composed of SEC3, SEC5, SEC6, SEC8, SEC10, SEC15, EXO70 and EXO84.

In terms of biological role, component of the exocyst complex involved in the docking of exocytic vesicles with fusion sites on the plasma membrane. In Mus musculus (Mouse), this protein is Exocyst complex component 6B (Exoc6b).